The following is a 110-amino-acid chain: PCNA-associated factor (110 aa).

Residue Lys15 forms a Glycyl lysine isopeptide (Lys-Gly) (interchain with G-Cter in ubiquitin) linkage. Positions 23-34 (RKVLGSSTFVTN) match the D-box motif. Position 24 is an N6-acetyllysine; alternate (Lys24). Residue Lys24 forms a Glycyl lysine isopeptide (Lys-Gly) (interchain with G-Cter in ubiquitin); alternate linkage. Ser28 carries the phosphoserine modification. Positions 29-39 (STFVTNSSGSS) are enriched in low complexity. Residues 29–110 (STFVTNSSGS…QPDHRDDENE (82 aa)) form a disordered region. Positions 61–71 (QKGIGEFFRLS) match the PIP-box motif. A Phosphoserine modification is found at Ser71. Basic and acidic residues predominate over residues 71–80 (SPKDSKKENQ). Positions 77-79 (KEN) match the KEN box motif. The short motif at 84-96 (EAGSSGLGKAKRK) is the Initiation motif element.

Interacts (when monoubiquitinated at Lys-15 and Lys-24) with PCNA. Interacts with isoform 2/p33ING1b of ING1. Interacts with BRCA1. Monoubiquitinated at Lys-15 and Lys-24 during normal S phase, promoting its association with PCNA. Also diubiquitinated at these 2 sites. Following DNA damage, monoubiquitin chains at Lys-15 and Lys-24 are probably extended, leading to disrupt the interaction with PCNA. Polyubiquitinated by the APC/C complex at the mitotic exit, leading to its degradation by the proteasome.

Its subcellular location is the nucleus. The protein localises to the cytoplasm. It localises to the perinuclear region. Functionally, PCNA-binding protein that acts as a regulator of DNA repair during DNA replication. Following DNA damage, the interaction with PCNA is disrupted, facilitating the interaction between monoubiquitinated PCNA and the translesion DNA synthesis DNA polymerase eta (POLH) at stalled replisomes, facilitating the bypass of replication-fork-blocking lesions. Also acts as a regulator of centrosome number. This chain is PCNA-associated factor, found in Rattus norvegicus (Rat).